The following is a 264-amino-acid chain: E3 ubiquitin-protein ligase MARCHF8 (264 aa).

Residues 15–47 (LGHSVSRSSNISKAGSPTSVSAPSSFPRTSVTP) form a disordered region. Positions 17 to 47 (HSVSRSSNISKAGSPTSVSAPSSFPRTSVTP) are enriched in polar residues. The RING-CH-type zinc-finger motif lies at 45–106 (VTPSSQDICR…ELCKFEFIME (62 aa)). Cysteine 53, cysteine 56, cysteine 70, cysteine 72, histidine 80, cysteine 83, cysteine 96, and cysteine 99 together coordinate Zn(2+). The next 2 helical transmembrane spans lie at 130–150 (CSVT…YVLI) and 170–190 (FWTK…FMYV).

The protein resides in the cytoplasmic vesicle membrane. It localises to the lysosome membrane. Its subcellular location is the early endosome membrane. It carries out the reaction S-ubiquitinyl-[E2 ubiquitin-conjugating enzyme]-L-cysteine + [acceptor protein]-L-lysine = [E2 ubiquitin-conjugating enzyme]-L-cysteine + N(6)-ubiquitinyl-[acceptor protein]-L-lysine.. It participates in protein modification; protein ubiquitination. In terms of biological role, E3 ubiquitin-protein ligase that mediates ubiquitination of cd86 and MHC class II proteins, such as hla-dr alpha and beta, and promotes their subsequent endocytosis and sorting to lysosomes via multivesicular bodies. The sequence is that of E3 ubiquitin-protein ligase MARCHF8 (marchf8) from Xenopus tropicalis (Western clawed frog).